The sequence spans 130 residues: Small ribosomal subunit protein uS11 (130 aa).

It belongs to the universal ribosomal protein uS11 family. As to quaternary structure, part of the 30S ribosomal subunit. Interacts with proteins S7 and S18. Binds to IF-3.

Located on the platform of the 30S subunit, it bridges several disparate RNA helices of the 16S rRNA. Forms part of the Shine-Dalgarno cleft in the 70S ribosome. In Gloeobacter violaceus (strain ATCC 29082 / PCC 7421), this protein is Small ribosomal subunit protein uS11.